Reading from the N-terminus, the 242-residue chain is Uridylate kinase (242 aa).

ATP is bound at residue 12–15 (KLSG). The interval 20–25 (GNDGFG) is involved in allosteric activation by GTP. UMP is bound at residue Gly54. ATP contacts are provided by Gly55 and Arg59. UMP contacts are provided by residues Asp74 and 135–142 (TGNPYFST). ATP is bound by residues Asn163, Tyr169, and Asp172.

This sequence belongs to the UMP kinase family. As to quaternary structure, homohexamer.

The protein localises to the cytoplasm. It carries out the reaction UMP + ATP = UDP + ADP. It participates in pyrimidine metabolism; CTP biosynthesis via de novo pathway; UDP from UMP (UMPK route): step 1/1. Its activity is regulated as follows. Allosterically activated by GTP. Inhibited by UTP. Its function is as follows. Catalyzes the reversible phosphorylation of UMP to UDP. The sequence is that of Uridylate kinase from Listeria innocua serovar 6a (strain ATCC BAA-680 / CLIP 11262).